We begin with the raw amino-acid sequence, 159 residues long: Voltage-dependent N-type calcium channel subunit alpha-1B (159 aa).

The helical transmembrane segment at 1-5 threads the bilayer; it reads LVTEI. The stretch at 1–159 is one IV repeat; that stretch reads LVTEIADTDN…LMLNLFVAVI (159 aa). Residues 6–13 are Extracellular-facing; it reads ADTDNFIN. Asparagine 13 is a glycosylation site (N-linked (GlcNAc...) asparagine). Residues 14-32 form a helical membrane-spanning segment; it reads LSFLRLFRAARLIKLLRQG. The Cytoplasmic portion of the chain corresponds to 33-51; it reads YTIRILLWTFVQSFKALPY. The chain crosses the membrane as a helical span at residues 52–71; that stretch reads VCLLIAMLFFIYAIIGMQVF. Residues 72–135 are Extracellular-facing; the sequence is GNIALNDETS…LTKNECGSDF (64 aa). A helical membrane pass occupies residues 136 to 155; the sequence is AYFYFVSFIFLCSFLMLNLF. Residues 156–159 lie on the Cytoplasmic side of the membrane; that stretch reads VAVI.

This sequence belongs to the calcium channel alpha-1 subunit (TC 1.A.1.11) family. CACNA1B subfamily. As to quaternary structure, multisubunit complex consisting of alpha-1, alpha-2, beta and delta subunits in a 1:1:1:1 ratio. The channel activity is directed by the pore-forming and voltage-sensitive alpha-1 subunit. In many cases, this subunit is sufficient to generate voltage-sensitive calcium channel activity. The auxiliary subunits beta and alpha-2/delta linked by a disulfide bridge regulate the channel activity. Interacts with RIMBP2. In terms of processing, phosphorylated in vitro by CaM-kinase II, PKA, PKC and CGPK.

The protein resides in the membrane. The enzyme catalyses Ca(2+)(in) = Ca(2+)(out). Voltage-sensitive calcium channels (VSCC) mediate the entry of calcium ions into excitable cells and are also involved in a variety of calcium-dependent processes, including muscle contraction, hormone or neurotransmitter release, gene expression, cell motility, cell division and cell death. This alpha-1B subunit gives rise to N-type calcium currents. N-type calcium channels belong to the 'high-voltage activated' (HVA) group. They are involved in pain signaling. Calcium channels containing alpha-1B subunit may play a role in directed migration of immature neurons. Mediates Ca(2+) release probability at hippocampal neuronal soma and synaptic terminals. The protein is Voltage-dependent N-type calcium channel subunit alpha-1B (CACNA1B) of Gallus gallus (Chicken).